The sequence spans 633 residues: DNA-directed RNA polymerase subunit beta' (633 aa).

Zn(2+) is bound by residues Cys-72, Cys-74, Cys-87, and Cys-90. Mg(2+)-binding residues include Asp-468, Asp-470, and Asp-472.

The protein belongs to the RNA polymerase beta' chain family. RpoC1 subfamily. In plastids the minimal PEP RNA polymerase catalytic core is composed of four subunits: alpha, beta, beta', and beta''. When a (nuclear-encoded) sigma factor is associated with the core the holoenzyme is formed, which can initiate transcription. The cofactor is Mg(2+). Zn(2+) serves as cofactor.

The protein resides in the plastid. It localises to the chloroplast. The catalysed reaction is RNA(n) + a ribonucleoside 5'-triphosphate = RNA(n+1) + diphosphate. DNA-dependent RNA polymerase catalyzes the transcription of DNA into RNA using the four ribonucleoside triphosphates as substrates. This is DNA-directed RNA polymerase subunit beta' from Cyanidium caldarium (Red alga).